The sequence spans 285 residues: 4-hydroxybenzoate octaprenyltransferase (285 aa).

The next 7 helical transmembrane spans lie at 20 to 39 (GSYL…AQGL), 92 to 112 (ALGL…ALNW), 137 to 157 (FPQV…FMAV), 159 to 179 (EAVP…TVAY), 206 to 226 (YDRL…LGMG), 228 to 248 (YLGF…LFIH), and 260 to 280 (ACFS…LGIA).

It belongs to the UbiA prenyltransferase family. Mg(2+) is required as a cofactor.

It localises to the cell inner membrane. It catalyses the reaction all-trans-octaprenyl diphosphate + 4-hydroxybenzoate = 4-hydroxy-3-(all-trans-octaprenyl)benzoate + diphosphate. Its pathway is cofactor biosynthesis; ubiquinone biosynthesis. In terms of biological role, catalyzes the prenylation of para-hydroxybenzoate (PHB) with an all-trans polyprenyl group. Mediates the second step in the final reaction sequence of ubiquinone-8 (UQ-8) biosynthesis, which is the condensation of the polyisoprenoid side chain with PHB, generating the first membrane-bound Q intermediate 3-octaprenyl-4-hydroxybenzoate. The sequence is that of 4-hydroxybenzoate octaprenyltransferase from Pseudoalteromonas atlantica (strain T6c / ATCC BAA-1087).